An 80-amino-acid polypeptide reads, in one-letter code: Large ribosomal subunit protein uL29 (80 aa).

Belongs to the universal ribosomal protein uL29 family.

The protein is Large ribosomal subunit protein uL29 of Saccharopolyspora erythraea (strain ATCC 11635 / DSM 40517 / JCM 4748 / NBRC 13426 / NCIMB 8594 / NRRL 2338).